The primary structure comprises 435 residues: MTSQGNKRTTKEGFGDLRFQNVSLLKNRSWPSLSSAKGRCRAVLEPLPDHRRNLAGVPGGEKCNSNNDYEDPEFQLLKAWPSMKILPARPIQESEYADTRYFQDTMEAPLLLPPKASVSTERQTRDVRMTHLEEVDKPTFKDVRSQRFKGFKYTKINKTPLPPPRPAITLPKKYQPLPPAPPEESSAYFAPKPTFPEVQRGPRQRSAKDFSRVLGAEEESHHQTKPESSCPSSNQNTQKSPPAIASSSYMPGKHSIQARDHTGSMQHCPAQRCQAAASHSPRMLPYENTNSEKPDPTKPDEKDVWQNEWYIGEYSRQAVEDVLMKENKDGTFLVRDCSTKSKAEPYVLVVFYGNKVYNVKIRFLESNQQFALGTGLRGNEMFDSVEDIIEHYTYFPILLIDGKDKAARRKQCYLTQPLPLARLLLTQYSSQALHE.

Tyr-69 and Tyr-96 each carry phosphotyrosine; by LYN. Positions 155-303 (KINKTPLPPP…PDPTKPDEKD (149 aa)) are disordered. A mediates interaction with PLCG1; essential for BCR signaling; involved in restoration of BCR-induced calcium response and ERK2 and JNK2 activation in BLNK-deficient cells expressing LAT region spans residues 160-165 (PLPPPR). A mediates interaction with LAT, GRB2, and FGR; involved in translocation to the glycolipid-enriched microdomain and restoration of BCR-induced calcium response in BLNK-deficient DT40 cells expressing LAT region spans residues 178-182 (PPAPP). Polar residues predominate over residues 226–249 (PESSCPSSNQNTQKSPPAIASSSY). The segment covering 290-303 (NSEKPDPTKPDEKD) has biased composition (basic and acidic residues). Residues 309-418 (WYIGEYSRQA…RKQCYLTQPL (110 aa)) form the SH2 domain.

When phosphorylated, interacts with PLCG1, PLCG2, GRB2, VAV and LAT. Associated with a tyrosine-phosphorylated polypeptide (p92) in response to immunoreceptor stimulation. Interacts with LBR and AGO2. Interacts with FGR. Part of a complex consisting of CLNK, SKAP1 and FYB1. Interacts (via SH2 domain) with FYB1; this interaction allows SKAP1 and FYB1 to promote tyrosine phosphorylation of CLNK by LYN. Interacts (via SH2 domain) with MAP4K1. Tyrosine-phosphorylated upon BCR cross-linking. Tyrosine phosphorylation at both Tyr-69 and Tyr-96 are required for BCR-induced calcium response and are essential to restore PLCG2-mediated signaling in BLNK-deficient DT40 cells, but this phosphorylation is dispensable in cells expressing LAT. Interacts with the SH2 domain of PLCG1 via phosphorylated Tyr-96. Tyrosine phosphorylation is increased when complexed with SKAP1 and FYB1. In terms of tissue distribution, expressed in T-cells, mast cells, natural killer and natural killer T cells (at protein level). Expressed in cytokine-stimulated hemopoietic cells.

The protein resides in the cytoplasm. An adapter protein which plays a role in the regulation of immunoreceptor signaling, including PLC-gamma-mediated B-cell antigen receptor (BCR) signaling and FC-epsilon R1-mediated mast cell degranulation. Together with FGR, it acts as a negative regulator of natural killer cell-activating receptors and inhibits interferon-gamma production. Acts as a positive regulator of both T-cell receptor and natural killer T (NKT) cell receptor signaling in CD4-positive NKT cells. Together with MAP4K1, it enhances CD3-triggered activation of T-cells and subsequent IL2 production. May be involved in tumor necrosis factor induced cell death by promoting reactive oxidative species generation, and MLKL oligomerization, ultimately leading to necrosis. Involved in phosphorylation of LAT. May be involved in high affinity immunoglobulin epsilon receptor signaling in mast cells. The protein is Cytokine-dependent hematopoietic cell linker (Clnk) of Mus musculus (Mouse).